A 92-amino-acid polypeptide reads, in one-letter code: Probable Fe(2+)-trafficking protein (92 aa).

It belongs to the Fe(2+)-trafficking protein family.

Could be a mediator in iron transactions between iron acquisition and iron-requiring processes, such as synthesis and/or repair of Fe-S clusters in biosynthetic enzymes. The sequence is that of Probable Fe(2+)-trafficking protein from Shewanella frigidimarina (strain NCIMB 400).